Reading from the N-terminus, the 214-residue chain is Putative nickel/cobalt efflux system MJ1092 (214 aa).

The next 6 membrane-spanning stretches (helical) occupy residues 2–22 (VMIMELLYAITAFILGMLHAL), 46–66 (ILLGTTITISHTAVIFLLGIL), 79–99 (VHDMMSVVGGLILIAVGIWII), 116–136 (VITLGLSAGLVPCPAALAVLL), 149–169 (IYVAIFSIGLAISLTGLAVAF), and 188–208 (LPLISGSIIILIGLYTIAHPI).

Belongs to the NiCoT transporter (TC 2.A.52) family.

Its subcellular location is the cell membrane. Functionally, efflux system for nickel and cobalt. The protein is Putative nickel/cobalt efflux system MJ1092 of Methanocaldococcus jannaschii (strain ATCC 43067 / DSM 2661 / JAL-1 / JCM 10045 / NBRC 100440) (Methanococcus jannaschii).